The primary structure comprises 73 residues: Long neurotoxin 2 (73 aa).

Cystine bridges form between Cys-3–Cys-21, Cys-14–Cys-42, Cys-27–Cys-31, Cys-46–Cys-57, and Cys-58–Cys-63.

It belongs to the three-finger toxin family. Long-chain subfamily. Type II alpha-neurotoxin sub-subfamily. In terms of tissue distribution, expressed by the venom gland.

It localises to the secreted. Functionally, binds with high affinity to muscular (alpha-1/CHRNA1) and neuronal (alpha-7/CHRNA7) nicotinic acetylcholine receptor (nAChR) and inhibits acetylcholine from binding to the receptor, thereby impairing neuromuscular and neuronal transmission. The protein is Long neurotoxin 2 of Ophiophagus hannah (King cobra).